The primary structure comprises 109 residues: Flagellar hook-basal body complex protein FliE (109 aa).

The protein belongs to the FliE family.

The protein localises to the bacterial flagellum basal body. This chain is Flagellar hook-basal body complex protein FliE, found in Pseudomonas fluorescens (strain Pf0-1).